The chain runs to 189 residues: Movement protein (189 aa).

The protein belongs to the tombusvirus/aureusvirus movement protein p22 family.

The protein localises to the host membrane. In terms of biological role, transports viral genome to neighboring plant cells directly through plasmosdesmata, without any budding. The movement protein allows efficient cell to cell propagation, by bypassing the host cell wall barrier. The chain is Movement protein from Artichoke mottled crinkle virus (AMCV).